The following is a 310-amino-acid chain: Methionyl-tRNA formyltransferase (310 aa).

Position 110-113 (110-113) interacts with (6S)-5,6,7,8-tetrahydrofolate; sequence SLLP.

The protein belongs to the Fmt family.

It catalyses the reaction L-methionyl-tRNA(fMet) + (6R)-10-formyltetrahydrofolate = N-formyl-L-methionyl-tRNA(fMet) + (6S)-5,6,7,8-tetrahydrofolate + H(+). Functionally, attaches a formyl group to the free amino group of methionyl-tRNA(fMet). The formyl group appears to play a dual role in the initiator identity of N-formylmethionyl-tRNA by promoting its recognition by IF2 and preventing the misappropriation of this tRNA by the elongation apparatus. The protein is Methionyl-tRNA formyltransferase of Streptomyces griseus subsp. griseus (strain JCM 4626 / CBS 651.72 / NBRC 13350 / KCC S-0626 / ISP 5235).